We begin with the raw amino-acid sequence, 508 residues long: Catalase (508 aa).

The signal sequence occupies residues 1 to 21 (MHMSKSFLLISMGLASISVHA). Catalysis depends on residues histidine 72 and asparagine 145. Residue tyrosine 353 participates in heme binding. A compositionally biased stretch (polar residues) spans 373–392 (PKSPVANHNQDGPSNNSTGL). The interval 373–396 (PKSPVANHNQDGPSNNSTGLGNVD) is disordered.

It belongs to the catalase family. It depends on heme as a cofactor.

Its subcellular location is the periplasm. It catalyses the reaction 2 H2O2 = O2 + 2 H2O. In terms of biological role, decomposes hydrogen peroxide into water and oxygen; serves to protect cells from the toxic effects of hydrogen peroxide. In Vibrio vulnificus (strain YJ016), this protein is Catalase.